The following is a 406-amino-acid chain: MTFSVDKVRADFPVLSREVNGLPLAYLDSAASAQKPSQVIDAEAEFYRHGYAAVHRGIHTLSAQATEKMENVRKRASLFINARSAEELVFVRGTTEGINLVANSWGNSNVRAGDNIIISQMEHHANIVPWQMLCARVGAELRVIPLNPDGTLQLETLPTLFDEKTRLLAITHVSNVLGTENPLAEMITLAHQHGAKVLVDGAQAVMHHPVDVQALDCDFYVFSGHKLYGPTGIGILYVKEALLQEMPPWEGGGSMIATVSLSEGTTWTKAPWRFEAGTPNTGGIIGLGAALEYVSALGLNNIAEYEQNLMHYALSQLAAVPDLTLYGPPDRLGVIAFNLGKHHAYDVGSFLDNYGIAVRTGHHCAMPLMAYYNVPAMCRASLAMYNTHEEVDRLVTGLQRIHRLLG.

Position 226 is an N6-(pyridoxal phosphate)lysine (K226). C364 serves as the catalytic Cysteine persulfide intermediate.

It belongs to the class-V pyridoxal-phosphate-dependent aminotransferase family. Csd subfamily. Homodimer. Interacts with SufE and the SufBCD complex composed of SufB, SufC and SufD. The interaction with SufE is required to mediate the direct transfer of the sulfur atom from the S-sulfanylcysteine. The cofactor is pyridoxal 5'-phosphate.

It localises to the cytoplasm. The catalysed reaction is (sulfur carrier)-H + L-cysteine = (sulfur carrier)-SH + L-alanine. It carries out the reaction L-selenocysteine + AH2 = hydrogenselenide + L-alanine + A + H(+). The protein operates within cofactor biosynthesis; iron-sulfur cluster biosynthesis. Its function is as follows. Cysteine desulfurases mobilize the sulfur from L-cysteine to yield L-alanine, an essential step in sulfur metabolism for biosynthesis of a variety of sulfur-containing biomolecules. Component of the suf operon, which is activated and required under specific conditions such as oxidative stress and iron limitation. Acts as a potent selenocysteine lyase in vitro, that mobilizes selenium from L-selenocysteine. Selenocysteine lyase activity is however unsure in vivo. In Escherichia coli O127:H6 (strain E2348/69 / EPEC), this protein is Cysteine desulfurase.